A 407-amino-acid polypeptide reads, in one-letter code: Argininosuccinate synthase (407 aa).

ATP-binding positions include 16-24 and A44; that span reads AYSGGLDTS. L-citrulline-binding residues include Y96 and S101. An ATP-binding site is contributed by G126. 3 residues coordinate L-aspartate: T128, N132, and D133. N132 lines the L-citrulline pocket. L-citrulline is bound by residues R136, S185, S194, E270, and Y282.

It belongs to the argininosuccinate synthase family. Type 1 subfamily. Homotetramer.

It is found in the cytoplasm. The catalysed reaction is L-citrulline + L-aspartate + ATP = 2-(N(omega)-L-arginino)succinate + AMP + diphosphate + H(+). It participates in amino-acid biosynthesis; L-arginine biosynthesis; L-arginine from L-ornithine and carbamoyl phosphate: step 2/3. The polypeptide is Argininosuccinate synthase (Shewanella frigidimarina (strain NCIMB 400)).